The primary structure comprises 467 residues: MTLADAQPQALNFECETGNYHTFCPISCVAWLYQKIEDSFFLVIGTKTCGYFLQNAMGVMIFAEPRYAMAELEEGDISAQLNDYNELKRLCEQIKRDRNPSVIVFIGTCTTEIIKMDLEGLAPKLESEIGIPIVVARANGLDYAFTQGEDTVLAAMAQRCPTQAPTAEADKEERNAIQKLMNFGRKQEDVKREESEYVDHPPLVMFGSVPDPIVTQLSLELKHQGIKVSGWLPAKRYTELPVIEEGYYVSGVNPFLSRTATTLMRRRKAKLIGSPFPIGPDGTRAWVEKICSVFNIEPKGLEEREAKIWQSVEDYLQLIRGKSVFFMGDNLLEISLARFLIRCGMTCHEIGIPYMDKRYQAAELDFLVKTCQEMGVPVPTIVEKPDNYNQLQRIHELKPDLVITGMAHANPLEARGISTKWSVEFTFAQIHGFGNTRDILELVTRPLRRNGALKDLGWEKLVEEARV.

The [4Fe-4S] cluster site is built by Cys-24, Cys-49, and Cys-109.

The protein belongs to the BchN/ChlN family. In terms of assembly, protochlorophyllide reductase is composed of three subunits; ChlL, ChlN and ChlB. Forms a heterotetramer of two ChlB and two ChlN subunits. It depends on [4Fe-4S] cluster as a cofactor.

The catalysed reaction is chlorophyllide a + oxidized 2[4Fe-4S]-[ferredoxin] + 2 ADP + 2 phosphate = protochlorophyllide a + reduced 2[4Fe-4S]-[ferredoxin] + 2 ATP + 2 H2O. Its pathway is porphyrin-containing compound metabolism; chlorophyll biosynthesis (light-independent). Functionally, component of the dark-operative protochlorophyllide reductase (DPOR) that uses Mg-ATP and reduced ferredoxin to reduce ring D of protochlorophyllide (Pchlide) to form chlorophyllide a (Chlide). This reaction is light-independent. The NB-protein (ChlN-ChlB) is the catalytic component of the complex. The protein is Light-independent protochlorophyllide reductase subunit N of Leptolyngbya boryana (Plectonema boryanum).